A 110-amino-acid chain; its full sequence is Endoribonuclease SymE (110 aa).

In terms of domain architecture, SpoVT-AbrB spans 29–74; the sequence is SRYPEYTRIPAITLKGQWLEDAGFTTGTQVDVRVMNGCIVLTAQQP.

This sequence belongs to the SymE family.

The protein resides in the cytoplasm. Its function is as follows. Involved in the degradation and recycling of damaged RNA. It is itself a target for degradation by the ATP-dependent protease Lon. The chain is Endoribonuclease SymE from Salmonella paratyphi C (strain RKS4594).